The chain runs to 311 residues: Ornithine carbamoyltransferase (311 aa).

Residues 57–60, Gln-84, Arg-108, and 135–138 each bind carbamoyl phosphate; these read STRT and HPCQ. Residues Asn-166, Asp-230, and 234–235 contribute to the L-ornithine site; that span reads SM. Carbamoyl phosphate is bound by residues 270-271 and Arg-298; that span reads CL.

This sequence belongs to the aspartate/ornithine carbamoyltransferase superfamily. OTCase family.

It localises to the cytoplasm. The enzyme catalyses carbamoyl phosphate + L-ornithine = L-citrulline + phosphate + H(+). It functions in the pathway amino-acid biosynthesis; L-arginine biosynthesis; L-arginine from L-ornithine and carbamoyl phosphate: step 1/3. Its function is as follows. Reversibly catalyzes the transfer of the carbamoyl group from carbamoyl phosphate (CP) to the N(epsilon) atom of ornithine (ORN) to produce L-citrulline. In Carboxydothermus hydrogenoformans (strain ATCC BAA-161 / DSM 6008 / Z-2901), this protein is Ornithine carbamoyltransferase.